Here is a 307-residue protein sequence, read N- to C-terminus: Elongation factor Ts (307 aa).

An involved in Mg(2+) ion dislocation from EF-Tu region spans residues 80–83 (TDFV).

It belongs to the EF-Ts family.

Its subcellular location is the cytoplasm. Associates with the EF-Tu.GDP complex and induces the exchange of GDP to GTP. It remains bound to the aminoacyl-tRNA.EF-Tu.GTP complex up to the GTP hydrolysis stage on the ribosome. This Rhodopseudomonas palustris (strain BisA53) protein is Elongation factor Ts.